Consider the following 681-residue polypeptide: DNA-directed RNA polymerase subunit beta' (681 aa).

Positions 69, 71, 87, and 90 each coordinate Zn(2+). Residues Asp489, Asp491, and Asp493 each contribute to the Mg(2+) site.

It belongs to the RNA polymerase beta' chain family. RpoC1 subfamily. In terms of assembly, in plastids the minimal PEP RNA polymerase catalytic core is composed of four subunits: alpha, beta, beta', and beta''. When a (nuclear-encoded) sigma factor is associated with the core the holoenzyme is formed, which can initiate transcription. The cofactor is Mg(2+). Zn(2+) is required as a cofactor.

The protein resides in the plastid. It localises to the chloroplast. The enzyme catalyses RNA(n) + a ribonucleoside 5'-triphosphate = RNA(n+1) + diphosphate. Its function is as follows. DNA-dependent RNA polymerase catalyzes the transcription of DNA into RNA using the four ribonucleoside triphosphates as substrates. The chain is DNA-directed RNA polymerase subunit beta' from Anthoceros angustus (Hornwort).